Consider the following 845-residue polypeptide: Putative DEAD-box ATP-dependent RNA helicase 33 (845 aa).

Disordered regions lie at residues 129–149 (GHPD…PMSP) and 282–302 (KFRK…NEGK). Residues 289–298 (STEEDSDEEG) are compositionally biased toward acidic residues. Residues 375-403 (KRFDESCISPLTLKALSASGIVKMTRVQD) carry the Q motif motif. Residues 406–590 (LSECLDGKDA…QLVLKRDHSY (185 aa)) enclose the Helicase ATP-binding domain. 419–426 (AKTGTGKS) is a binding site for ATP. The DEAD box signature appears at 538-541 (DEAD). In terms of domain architecture, Helicase C-terminal spans 624 to 778 (LLKEHINNMP…QVDQSMAKID (155 aa)).

This sequence belongs to the DEAD box helicase family.

The enzyme catalyses ATP + H2O = ADP + phosphate + H(+). The polypeptide is Putative DEAD-box ATP-dependent RNA helicase 33 (RH33) (Arabidopsis thaliana (Mouse-ear cress)).